A 376-amino-acid chain; its full sequence is Thymidine kinase (376 aa).

Residues 1 to 39 (MASYPCHQHASAFDQAARSRGHSNRRTALRPRRQQEATE) form a disordered region. The segment covering 19-32 (SRGHSNRRTALRPR) has biased composition (basic residues). 56-63 (GPHGMGKT) serves as a coordination point for ATP. The Proton acceptor role is filled by Glu-83. Residues Tyr-101 and Gln-125 each contribute to the substrate site. ATP is bound at residue Arg-216. Arg-222 contacts substrate. Residues 260 to 280 (GQLSGTAVPPQGAEPQSNAGP) are disordered.

The protein belongs to the herpesviridae thymidine kinase family. In terms of assembly, homodimer.

It carries out the reaction thymidine + ATP = dTMP + ADP + H(+). Catalyzes the transfer of the gamma-phospho group of ATP to thymidine to generate dTMP in the salvage pathway of pyrimidine synthesis. The dTMP serves as a substrate for DNA polymerase during viral DNA replication. Allows the virus to be reactivated and to grow in non-proliferative cells lacking a high concentration of phosphorylated nucleic acid precursors. The protein is Thymidine kinase of Human herpesvirus 1 (strain KOS) (HHV-1).